A 341-amino-acid chain; its full sequence is Phenylalanine--tRNA ligase alpha subunit (341 aa).

Residue Glu-256 coordinates Mg(2+).

The protein belongs to the class-II aminoacyl-tRNA synthetase family. Phe-tRNA synthetase alpha subunit type 1 subfamily. In terms of assembly, tetramer of two alpha and two beta subunits. Mg(2+) is required as a cofactor.

It localises to the cytoplasm. It carries out the reaction tRNA(Phe) + L-phenylalanine + ATP = L-phenylalanyl-tRNA(Phe) + AMP + diphosphate + H(+). The sequence is that of Phenylalanine--tRNA ligase alpha subunit from Chlamydia felis (strain Fe/C-56) (Chlamydophila felis).